The primary structure comprises 192 residues: Fe/S biogenesis protein NfuA (192 aa).

Residues Cys149 and Cys152 each coordinate [4Fe-4S] cluster.

Belongs to the NfuA family. As to quaternary structure, homodimer. The cofactor is [4Fe-4S] cluster.

Its function is as follows. Involved in iron-sulfur cluster biogenesis. Binds a 4Fe-4S cluster, can transfer this cluster to apoproteins, and thereby intervenes in the maturation of Fe/S proteins. Could also act as a scaffold/chaperone for damaged Fe/S proteins. The polypeptide is Fe/S biogenesis protein NfuA (Shewanella putrefaciens (strain CN-32 / ATCC BAA-453)).